The chain runs to 178 residues: UPF0302 protein BcerKBAB4_1445 (178 aa).

It belongs to the UPF0302 family.

The polypeptide is UPF0302 protein BcerKBAB4_1445 (Bacillus mycoides (strain KBAB4) (Bacillus weihenstephanensis)).